Here is a 111-residue protein sequence, read N- to C-terminus: WAP four-disulfide core domain protein 12 (111 aa).

Positions 1 to 23 (MGSSSFLVLMVSLALVTLVVVEG) are cleaved as a signal peptide. One can recognise a WAP domain in the interval 27-74 (GIEKAGVCPADNVRCFKSNPPQCHTDQDCLGERKCCYLHCGFKCVIPV). 4 disulfides stabilise this stretch: Cys-34–Cys-62, Cys-41–Cys-66, Cys-49–Cys-61, and Cys-55–Cys-70. Residues 80–111 (GGNKDEDVSGPHPEPGWEAKSPGSSSTGCPQI) are disordered. Residues 101-111 (PGSSSTGCPQI) are compositionally biased toward polar residues.

The protein resides in the secreted. Its function is as follows. Antibacterial protein. Putative acid-stable proteinase inhibitor. In Colobus guereza (Mantled guereza), this protein is WAP four-disulfide core domain protein 12 (WFDC12).